We begin with the raw amino-acid sequence, 351 residues long: Small ribosomal subunit protein uS2 (351 aa).

The segment at 302 to 351 is disordered; sequence QNNYDPSKRGYNPKYVNHKSTFNKFNNKKPAEATSQAKTNEKIVIKAETN. The span at 340–351 shows a compositional bias: basic and acidic residues; the sequence is TNEKIVIKAETN.

It belongs to the universal ribosomal protein uS2 family.

The chain is Small ribosomal subunit protein uS2 from Ureaplasma urealyticum serovar 10 (strain ATCC 33699 / Western).